The sequence spans 570 residues: MSVKIPRSVYADMFGPTTGDRVRLADTDLIIEVEKDFTIYGEEVKFGGGKVIRDGMGQSQVTNAQGAADTVITNALIVDHWGIVKADVALKDGYIAAIGKAGNPDIQPGVTIIIGPGTDIIAGEGKILTAGGFDSHIHFICPQQIEHALMSGVTSMLGGGTGPSHGTFATTCTPGPWHLGRMIQSFDAFPVNLGLAGKGNASQPAALKEMIEAGACALKLHEDWGTTPAAIDNCLTVADDYDVQVMIHSDTLNESGFVEDTIKAFKGRTIHAFHTEGAGGGHAPDIIKVAGLPNVLPSSTNPTRPFTKNTIDEHLDMLMVCHHLDPSIAEDLAFAESRIRKETIAAEDILHDLGALSMMSSDSQAMGRLGEVIIRTWQTADKMKKQRGSLPQDSARNDNFRVKRYIAKYTINPAIAHGVARLIGSIEQGKLADLVLWSPAFFGVKPDLIIKGGSIVAAPMGDPNASIPTPQPVHYQPMFAAYGRSLFASSVVFTSQAAVAEGLAKKLGIQKSLYGVENTRSGISKKSMIHNDATPNIEVDPETYEVRADGELLTCAPAEVLPMAQRYFMY.

A Urease domain is found at Gly-131 to Tyr-570. Ni(2+) contacts are provided by His-136, His-138, and Lys-219. Lys-219 is modified (N6-carboxylysine). Position 221 (His-221) interacts with substrate. The Ni(2+) site is built by His-248 and His-274. His-322 acts as the Proton donor in catalysis. Ni(2+) is bound at residue Asp-362.

The protein belongs to the metallo-dependent hydrolases superfamily. Urease alpha subunit family. As to quaternary structure, heterotrimer of UreA (gamma), UreB (beta) and UreC (alpha) subunits. Three heterotrimers associate to form the active enzyme. Requires Ni cation as cofactor. Post-translationally, carboxylation allows a single lysine to coordinate two nickel ions.

It is found in the cytoplasm. It catalyses the reaction urea + 2 H2O + H(+) = hydrogencarbonate + 2 NH4(+). It participates in nitrogen metabolism; urea degradation; CO(2) and NH(3) from urea (urease route): step 1/1. The sequence is that of Urease subunit alpha from Rhodopseudomonas palustris (strain BisB18).